The following is a 944-amino-acid chain: UvrABC system protein A (944 aa).

An ATP-binding site is contributed by Gly-33–Ser-40. The segment at Cys-252 to Cys-279 adopts a C4-type zinc-finger fold. ABC transporter domains follow at residues Trp-309–Leu-587 and Ile-607–Lys-935. Gly-639–Ser-646 provides a ligand contact to ATP. The segment at Cys-738–Cys-764 adopts a C4-type zinc-finger fold.

This sequence belongs to the ABC transporter superfamily. UvrA family. In terms of assembly, forms a heterotetramer with UvrB during the search for lesions.

Its subcellular location is the cytoplasm. The UvrABC repair system catalyzes the recognition and processing of DNA lesions. UvrA is an ATPase and a DNA-binding protein. A damage recognition complex composed of 2 UvrA and 2 UvrB subunits scans DNA for abnormalities. When the presence of a lesion has been verified by UvrB, the UvrA molecules dissociate. The protein is UvrABC system protein A of Staphylococcus epidermidis (strain ATCC 35984 / DSM 28319 / BCRC 17069 / CCUG 31568 / BM 3577 / RP62A).